The primary structure comprises 262 residues: Methanethiol S-methyltransferase (262 aa).

The next 5 membrane-spanning stretches (helical) occupy residues 22-42 (LYSL…IGFV), 55-75 (PGAS…LFAV), 100-120 (ATYV…WQPI), 134-154 (AVLT…TFLI), and 195-215 (GFLM…VFAL).

The protein belongs to the nurim family.

It is found in the membrane. It catalyses the reaction methanethiol + S-adenosyl-L-methionine = dimethyl sulfide + S-adenosyl-L-homocysteine + H(+). In terms of biological role, catalyzes the methylation of methanethiol (MeSH) to yield dimethylsulphide (DMS). This Pseudomonas deceptionensis protein is Methanethiol S-methyltransferase.